We begin with the raw amino-acid sequence, 448 residues long: UDP-N-acetylglucosamine--dolichyl-phosphate N-acetylglucosaminephosphotransferase (448 aa).

The chain crosses the membrane as a helical span at residues A24–P44. UDP-N-acetyl-alpha-D-glucosamine is bound by residues K58–L60 and E70. Transmembrane regions (helical) follow at residues I72–F92 and Y129–F149. K156 lines the dolichyl phosphate pocket. 2 consecutive transmembrane segments (helical) span residues F157–V177 and Y202–V222. A dolichyl phosphate-binding site is contributed by I210–I218. Residue N217 participates in Mg(2+) binding. UDP-N-acetyl-alpha-D-glucosamine is bound at residue N223. Helical transmembrane passes span I231–A251, H256–W276, V283–L303, and T309–F329. D287 lines the Mg(2+) pocket. Residue R336–R338 participates in UDP-N-acetyl-alpha-D-glucosamine binding. Transmembrane regions (helical) follow at residues E387–M407 and L419–F439.

It belongs to the glycosyltransferase 4 family. Mg(2+) serves as cofactor.

Its subcellular location is the endoplasmic reticulum membrane. It carries out the reaction a di-trans,poly-cis-dolichyl phosphate + UDP-N-acetyl-alpha-D-glucosamine = an N-acetyl-alpha-D-glucosaminyl-diphospho-di-trans,poly-cis-dolichol + UMP. It functions in the pathway protein modification; protein glycosylation. With respect to regulation, inhibited by natural nucleoside antibiotic tunicamycin, which acts as a structural analog and competitor of UDP-GlcNAc. Functionally, UDP-N-acetylglucosamine--dolichyl-phosphate N-acetylglucosaminephosphotransferase that operates in the biosynthetic pathway of dolichol-linked oligosaccharides, the glycan precursors employed in protein asparagine (N)-glycosylation. The assembly of dolichol-linked oligosaccharides begins on the cytosolic side of the endoplasmic reticulum membrane and finishes in its lumen. The sequential addition of sugars to dolichol pyrophosphate produces dolichol-linked oligosaccharides containing fourteen sugars, including two GlcNAcs, nine mannoses and three glucoses. Once assembled, the oligosaccharide is transferred from the lipid to nascent proteins by oligosaccharyltransferases. Catalyzes the initial step of dolichol-linked oligosaccharide biosynthesis, transfering GlcNAc-1-P from cytosolic UDP-GlcNAc onto the carrier lipid dolichyl phosphate (P-dolichol), yielding GlcNAc-P-P-dolichol embedded in the cytoplasmic leaflet of the endoplasmic reticulum membrane. This chain is UDP-N-acetylglucosamine--dolichyl-phosphate N-acetylglucosaminephosphotransferase (ALG7), found in Saccharomyces cerevisiae (strain ATCC 204508 / S288c) (Baker's yeast).